The following is a 293-amino-acid chain: Probable xyloglucan endotransglucosylase/hydrolase protein 5 (293 aa).

The first 21 residues, 1-21 (MGRLSSTLCLTFLILATVAFG), serve as a signal peptide directing secretion. The 198-residue stretch at 23-220 (PPKKSINVPF…WEKAPFVASY (198 aa)) folds into the GH16 domain. The Nucleophile role is filled by glutamate 106. The active-site Proton donor is glutamate 110. Glutamate 110 is a xyloglucan binding site. N-linked (GlcNAc...) asparagine glycosylation occurs at asparagine 114. Xyloglucan is bound by residues 123–125 (QTN), 133–135 (NRE), 199–200 (DW), and glycine 204. Intrachain disulfides connect cysteine 228–cysteine 237 and cysteine 274–cysteine 287. Arginine 279 is a binding site for xyloglucan.

This sequence belongs to the glycosyl hydrolase 16 family. XTH group 1 subfamily. In terms of processing, contains at least one intrachain disulfide bond essential for its enzymatic activity. Root specific.

It localises to the secreted. The protein localises to the cell wall. The protein resides in the extracellular space. It is found in the apoplast. The catalysed reaction is breaks a beta-(1-&gt;4) bond in the backbone of a xyloglucan and transfers the xyloglucanyl segment on to O-4 of the non-reducing terminal glucose residue of an acceptor, which can be a xyloglucan or an oligosaccharide of xyloglucan.. Functionally, catalyzes xyloglucan endohydrolysis (XEH) and/or endotransglycosylation (XET). Cleaves and religates xyloglucan polymers, an essential constituent of the primary cell wall, and thereby participates in cell wall construction of growing tissues. This chain is Probable xyloglucan endotransglucosylase/hydrolase protein 5 (XTH5), found in Arabidopsis thaliana (Mouse-ear cress).